Consider the following 339-residue polypeptide: Putative zinc metalloprotease CA_C1796 (339 aa).

Histidine 20 lines the Zn(2+) pocket. Glutamate 21 is an active-site residue. Histidine 24 is a Zn(2+) binding site. 3 helical membrane-spanning segments follow: residues 91 to 113, 275 to 297, and 310 to 330; these read LSIVIAGPIMNLILAAVLFCIVG, QLGVMNLLPIPALDGGFVFLFLF, and VGFVNTIGFALLMILMIVVTI. The PDZ domain maps to 99–177; that stretch reads IMNLILAAVL…GIKLALKNNG (79 aa).

This sequence belongs to the peptidase M50B family. Zn(2+) serves as cofactor.

It is found in the cell membrane. In Clostridium acetobutylicum (strain ATCC 824 / DSM 792 / JCM 1419 / IAM 19013 / LMG 5710 / NBRC 13948 / NRRL B-527 / VKM B-1787 / 2291 / W), this protein is Putative zinc metalloprotease CA_C1796.